The sequence spans 369 residues: Coproporphyrin III ferrochelatase (369 aa).

Positions 61 and 130 each coordinate Fe-coproporphyrin III. Residues His-197 and Glu-286 each contribute to the Fe(2+) site.

It belongs to the ferrochelatase family.

The protein localises to the cytoplasm. The catalysed reaction is Fe-coproporphyrin III + 2 H(+) = coproporphyrin III + Fe(2+). It functions in the pathway porphyrin-containing compound metabolism; protoheme biosynthesis. In terms of biological role, involved in coproporphyrin-dependent heme b biosynthesis. Catalyzes the insertion of ferrous iron into coproporphyrin III to form Fe-coproporphyrin III. This is Coproporphyrin III ferrochelatase from Corynebacterium diphtheriae (strain ATCC 700971 / NCTC 13129 / Biotype gravis).